We begin with the raw amino-acid sequence, 255 residues long: 1-acyl-sn-glycerol-3-phosphate acyltransferase (255 aa).

The HXXXXD motif motif lies at 78-83; the sequence is HVSWLD.

The protein belongs to the 1-acyl-sn-glycerol-3-phosphate acyltransferase family.

It is found in the cell inner membrane. The enzyme catalyses a 1-acyl-sn-glycero-3-phosphate + an acyl-CoA = a 1,2-diacyl-sn-glycero-3-phosphate + CoA. It participates in phospholipid metabolism; CDP-diacylglycerol biosynthesis; CDP-diacylglycerol from sn-glycerol 3-phosphate: step 2/3. Functionally, converts lysophosphatidic acid (LPA) into phosphatidic acid by incorporating acyl moiety at the 2 position. The polypeptide is 1-acyl-sn-glycerol-3-phosphate acyltransferase (plsC) (Neisseria gonorrhoeae).